A 307-amino-acid chain; its full sequence is Ribosomal RNA small subunit methyltransferase H (307 aa).

Residues 32 to 34 (GGH), Asp52, Phe78, Asp99, and Gln106 contribute to the S-adenosyl-L-methionine site. Residues 287–307 (KEEIESNKRSHSAKLRVAEKV) form a disordered region.

The protein belongs to the methyltransferase superfamily. RsmH family.

Its subcellular location is the cytoplasm. The catalysed reaction is cytidine(1402) in 16S rRNA + S-adenosyl-L-methionine = N(4)-methylcytidine(1402) in 16S rRNA + S-adenosyl-L-homocysteine + H(+). In terms of biological role, specifically methylates the N4 position of cytidine in position 1402 (C1402) of 16S rRNA. The sequence is that of Ribosomal RNA small subunit methyltransferase H from Caldicellulosiruptor bescii (strain ATCC BAA-1888 / DSM 6725 / KCTC 15123 / Z-1320) (Anaerocellum thermophilum).